A 231-amino-acid polypeptide reads, in one-letter code: Large ribosomal subunit protein uL1 (231 aa).

Belongs to the universal ribosomal protein uL1 family. As to quaternary structure, part of the 50S ribosomal subunit.

Functionally, binds directly to 23S rRNA. The L1 stalk is quite mobile in the ribosome, and is involved in E site tRNA release. Protein L1 is also a translational repressor protein, it controls the translation of the L11 operon by binding to its mRNA. The protein is Large ribosomal subunit protein uL1 of Legionella pneumophila (strain Paris).